Consider the following 394-residue polypeptide: Endothelial cell-selective adhesion molecule (394 aa).

An N-terminal signal peptide occupies residues 1–29; the sequence is MILPARTPETSLLRVLFLGLSTLAAFSLA. At 30-251 the chain is on the extracellular side; sequence QMELHVPPGL…LDVMTGSKAA (222 aa). The Ig-like V-type domain maps to 37–146; sequence PGLNKLEAVE…DGKNIGHSIK (110 aa). 4 N-linked (GlcNAc...) asparagine glycosylation sites follow: N111, N172, N216, and N239. The 88-residue stretch at 156-243 folds into the Ig-like C2-type domain; the sequence is PAPPSCSFQG…GFAQCNVTLD (88 aa). A disulfide bond links C177 and C227. A helical transmembrane segment spans residues 252–272; that stretch reads VVAGAVVGTFVGLVLIAGLVL. Topologically, residues 273 to 394 are cytoplasmic; it reads LYQRRSKTLE…PAQSQAGSLV (122 aa). The disordered stretch occupies residues 300–372; it reads WTKGSDTISK…SLTPGGVSSS (73 aa). 2 stretches are compositionally biased toward polar residues: residues 303–318 and 335–347; these read GSDTISKNGTLSSVTS and FTPTPSVSSQALS. S304 carries the post-translational modification Phosphoserine. A phosphothreonine mark is found at T336 and T338. Phosphoserine is present on residues S340, S343, and S348.

As to quaternary structure, interacts with MAGI1.

It localises to the cell junction. The protein localises to the adherens junction. The protein resides in the tight junction. It is found in the cell membrane. Can mediate aggregation most likely through a homophilic molecular interaction. In Rattus norvegicus (Rat), this protein is Endothelial cell-selective adhesion molecule (Esam).